The following is a 500-amino-acid chain: Probable cytosol aminopeptidase (500 aa).

Mn(2+) is bound by residues K274 and D279. Residue K286 is part of the active site. Mn(2+) contacts are provided by D297, D356, and E358. Residue R360 is part of the active site.

This sequence belongs to the peptidase M17 family. The cofactor is Mn(2+).

Its subcellular location is the cytoplasm. The catalysed reaction is Release of an N-terminal amino acid, Xaa-|-Yaa-, in which Xaa is preferably Leu, but may be other amino acids including Pro although not Arg or Lys, and Yaa may be Pro. Amino acid amides and methyl esters are also readily hydrolyzed, but rates on arylamides are exceedingly low.. It carries out the reaction Release of an N-terminal amino acid, preferentially leucine, but not glutamic or aspartic acids.. Its function is as follows. Presumably involved in the processing and regular turnover of intracellular proteins. Catalyzes the removal of unsubstituted N-terminal amino acids from various peptides. The chain is Probable cytosol aminopeptidase from Saccharophagus degradans (strain 2-40 / ATCC 43961 / DSM 17024).